A 293-amino-acid polypeptide reads, in one-letter code: 4-hydroxybenzoate octaprenyltransferase (293 aa).

7 consecutive transmembrane segments (helical) span residues 25–45 (IGNFLLLWPMLWGLWIAAKGL), 48–68 (LKVLVVFVLGVLIMRAAGCVI), 101–121 (LFVVLCLVAFGLVLLMNPLTI), 142–162 (HFPQVHLGAAFGWAIPMAFAA), 165–185 (GAVAPVAWLLFLSAVLWATIY), 223–243 (VMLAVLVAAGLVVGLGAFWYL), and 271–291 (FLNNNWLGGLIFLGLLLDLHL).

This sequence belongs to the UbiA prenyltransferase family. Mg(2+) is required as a cofactor.

The protein localises to the cell inner membrane. It carries out the reaction all-trans-octaprenyl diphosphate + 4-hydroxybenzoate = 4-hydroxy-3-(all-trans-octaprenyl)benzoate + diphosphate. It participates in cofactor biosynthesis; ubiquinone biosynthesis. Catalyzes the prenylation of para-hydroxybenzoate (PHB) with an all-trans polyprenyl group. Mediates the second step in the final reaction sequence of ubiquinone-8 (UQ-8) biosynthesis, which is the condensation of the polyisoprenoid side chain with PHB, generating the first membrane-bound Q intermediate 3-octaprenyl-4-hydroxybenzoate. This chain is 4-hydroxybenzoate octaprenyltransferase, found in Alkalilimnicola ehrlichii (strain ATCC BAA-1101 / DSM 17681 / MLHE-1).